The primary structure comprises 180 residues: ATP synthase subunit delta (180 aa).

It belongs to the ATPase delta chain family. F-type ATPases have 2 components, F(1) - the catalytic core - and F(0) - the membrane proton channel. F(1) has five subunits: alpha(3), beta(3), gamma(1), delta(1), epsilon(1). F(0) has three main subunits: a(1), b(2) and c(10-14). The alpha and beta chains form an alternating ring which encloses part of the gamma chain. F(1) is attached to F(0) by a central stalk formed by the gamma and epsilon chains, while a peripheral stalk is formed by the delta and b chains.

The protein localises to the cell inner membrane. In terms of biological role, f(1)F(0) ATP synthase produces ATP from ADP in the presence of a proton or sodium gradient. F-type ATPases consist of two structural domains, F(1) containing the extramembraneous catalytic core and F(0) containing the membrane proton channel, linked together by a central stalk and a peripheral stalk. During catalysis, ATP synthesis in the catalytic domain of F(1) is coupled via a rotary mechanism of the central stalk subunits to proton translocation. Functionally, this protein is part of the stalk that links CF(0) to CF(1). It either transmits conformational changes from CF(0) to CF(1) or is implicated in proton conduction. This is ATP synthase subunit delta from Geobacter sp. (strain M21).